Consider the following 672-residue polypeptide: Prion-like-(Q/N-rich) domain-bearing protein 25 (672 aa).

Residues 26 to 46 (VPPPIMICLFFLLLQIFVISV) traverse the membrane as a helical segment.

It is found in the membrane. The polypeptide is Prion-like-(Q/N-rich) domain-bearing protein 25 (pqn-25) (Caenorhabditis elegans).